A 41-amino-acid polypeptide reads, in one-letter code: Inducible serine protease inhibitor 3 (41 aa).

Functionally, inhibits trypsin and the toxin proteases PR1 and PR2 of M.anisopliae. Does not inhibit chymotrypsin, subtilisin Carlsberg, proteinase K and porcine pancreatic elastase. This Galleria mellonella (Greater wax moth) protein is Inducible serine protease inhibitor 3.